A 59-amino-acid polypeptide reads, in one-letter code: MAVPKKKTSKGKRDQRHAHWKAKARVAARKALSAGKAVLSGRAQGFVYPMPEEDGEAES.

It belongs to the bacterial ribosomal protein bL32 family.

The polypeptide is Large ribosomal subunit protein bL32 (Synechococcus sp. (strain RCC307)).